The following is a 321-amino-acid chain: Carbonic anhydrase, chloroplastic (321 aa).

Residues 1-100 (MSTASINSCL…AAARVDQITA (100 aa)) constitute a chloroplast transit peptide.

This sequence belongs to the beta-class carbonic anhydrase family. Homohexamer.

It is found in the plastid. Its subcellular location is the chloroplast stroma. The catalysed reaction is hydrogencarbonate + H(+) = CO2 + H2O. Functionally, reversible hydration of carbon dioxide. This chain is Carbonic anhydrase, chloroplastic, found in Nicotiana tabacum (Common tobacco).